A 435-amino-acid polypeptide reads, in one-letter code: Exodeoxyribonuclease 7 large subunit (435 aa).

The span at Met1 to Ala10 shows a compositional bias: polar residues. Disordered stretches follow at residues Met1–Thr21 and Ala413–Lys435.

The protein belongs to the XseA family. As to quaternary structure, heterooligomer composed of large and small subunits.

It is found in the cytoplasm. It catalyses the reaction Exonucleolytic cleavage in either 5'- to 3'- or 3'- to 5'-direction to yield nucleoside 5'-phosphates.. Functionally, bidirectionally degrades single-stranded DNA into large acid-insoluble oligonucleotides, which are then degraded further into small acid-soluble oligonucleotides. In Leifsonia xyli subsp. xyli (strain CTCB07), this protein is Exodeoxyribonuclease 7 large subunit.